The following is a 199-amino-acid chain: Single-stranded DNA-binding protein 2 (199 aa).

The SSB domain occupies Met1–Leu110. The interval Thr114–Phe199 is disordered. Over residues Gln123–Ala156 the composition is skewed to gly residues. Positions Pro157 to Gly166 are enriched in low complexity. Residues Ala167–Tyr193 show a composition bias toward gly residues.

Homotetramer. Post-translationally, phosphorylated on tyrosine residue(s) when expressed in E.coli.

The protein resides in the cytoplasm. Its subcellular location is the nucleoid. The polypeptide is Single-stranded DNA-binding protein 2 (ssb2) (Streptomyces coelicolor (strain ATCC BAA-471 / A3(2) / M145)).